The chain runs to 34 residues: MSDIN-like toxin proprotein 4 (34 aa).

Positions 1–10 are excised as a propeptide; sequence MSDINTARLP. The cyclopeptide (Leu-Pro) cross-link spans 11-20; that stretch reads LFLPPVRMPP. The propeptide occupies 21–34; sequence CVGDDIEMVLTRGE.

Belongs to the MSDIN fungal toxin family. In terms of processing, processed by the macrocyclase-peptidase enzyme POPB to yield a toxic cyclic decapeptide. POPB first removes 10 residues from the N-terminus. Conformational trapping of the remaining peptide forces the enzyme to release this intermediate rather than proceed to macrocyclization. The enzyme rebinds the remaining peptide in a different conformation and catalyzes macrocyclization of the N-terminal 10 residues.

In terms of biological role, probable toxin that belongs to the MSDIN-like toxin family responsible for a large number of food poisoning cases and deaths. The polypeptide is MSDIN-like toxin proprotein 4 (Amanita bisporigera (Destroying angel)).